The primary structure comprises 178 residues: SsrA-binding protein (178 aa).

Residues 1-28 (MAKKSTPVDSGRSKGKKASAPRGGGPAV) form a disordered region.

It belongs to the SmpB family.

It localises to the cytoplasm. Its function is as follows. Required for rescue of stalled ribosomes mediated by trans-translation. Binds to transfer-messenger RNA (tmRNA), required for stable association of tmRNA with ribosomes. tmRNA and SmpB together mimic tRNA shape, replacing the anticodon stem-loop with SmpB. tmRNA is encoded by the ssrA gene; the 2 termini fold to resemble tRNA(Ala) and it encodes a 'tag peptide', a short internal open reading frame. During trans-translation Ala-aminoacylated tmRNA acts like a tRNA, entering the A-site of stalled ribosomes, displacing the stalled mRNA. The ribosome then switches to translate the ORF on the tmRNA; the nascent peptide is terminated with the 'tag peptide' encoded by the tmRNA and targeted for degradation. The ribosome is freed to recommence translation, which seems to be the essential function of trans-translation. The sequence is that of SsrA-binding protein from Corynebacterium urealyticum (strain ATCC 43042 / DSM 7109).